Consider the following 351-residue polypeptide: tRNA N6-adenosine threonylcarbamoyltransferase (351 aa).

Residues His-124 and His-128 each coordinate Fe cation. Residues 146-150 (LVSGG), Asp-180, Gly-193, Asp-197, and Asn-285 each bind substrate. Asp-313 lines the Fe cation pocket.

This sequence belongs to the KAE1 / TsaD family. Requires Fe(2+) as cofactor.

The protein resides in the cytoplasm. The catalysed reaction is L-threonylcarbamoyladenylate + adenosine(37) in tRNA = N(6)-L-threonylcarbamoyladenosine(37) in tRNA + AMP + H(+). Functionally, required for the formation of a threonylcarbamoyl group on adenosine at position 37 (t(6)A37) in tRNAs that read codons beginning with adenine. Is involved in the transfer of the threonylcarbamoyl moiety of threonylcarbamoyl-AMP (TC-AMP) to the N6 group of A37, together with TsaE and TsaB. TsaD likely plays a direct catalytic role in this reaction. The chain is tRNA N6-adenosine threonylcarbamoyltransferase from Mycobacterium leprae (strain TN).